The following is a 306-amino-acid chain: [methyl-Co(III) glycine betaine-specific corrinoid protein]--tetrahydrofolate methyltransferase (306 aa).

This sequence belongs to the MtrH family.

The enzyme catalyses methyl-Co(III)-[glycine betaine-specific corrinoid protein] + (6S)-5,6,7,8-tetrahydrofolate = Co(I)-[glycine betaine-specific corrinoid protein] + (6S)-5-methyl-5,6,7,8-tetrahydrofolate + H(+). Its function is as follows. Methyltransferase able to catalyze the transfer of a methyl group from methylcobalamin (methylCbl) to tetrahydrofolate (THF) in vitro, to generate methyl-THF and cob(I)alamin. In vivo, the methyl group probably comes from the adjacently encoded methylated corrinoid protein DSY3155. The methyl group may then be ultimately converted to carbon dioxide, and its oxidation would also provide reducing equivalents for anaerobic respiration. Thus, may function in the pathway that allows anaerobic methylotrophic growth of D.hafniense using glycine betaine. The protein is [methyl-Co(III) glycine betaine-specific corrinoid protein]--tetrahydrofolate methyltransferase of Desulfitobacterium hafniense (strain Y51).